A 177-amino-acid chain; its full sequence is Ferritin heavy chain, oocyte isoform (177 aa).

Residues 7-156 (QNFHQECEAA…DHITNLRRMG (150 aa)) form the Ferritin-like diiron domain. Fe cation is bound by residues Glu24, Glu59, His62, Glu104, and Gln138.

Belongs to the ferritin family. Oligomer of 24 subunits. There are two types of subunits: L (light) chain and H (heavy) chain. The functional molecule is roughly spherical and contains a central cavity into which the insoluble mineral iron core is deposited.

The protein localises to the cytoplasm. It catalyses the reaction 4 Fe(2+) + O2 + 4 H(+) = 4 Fe(3+) + 2 H2O. Its function is as follows. Stores iron in a soluble, non-toxic, readily available form. Important for iron homeostasis. Has ferroxidase activity. Iron is taken up in the ferrous form and deposited as ferric hydroxides after oxidation. The chain is Ferritin heavy chain, oocyte isoform from Xenopus laevis (African clawed frog).